The following is a 586-amino-acid chain: NudC domain-containing protein 1 (586 aa).

A CS domain is found at 275–364; the sequence is KREPLYNWQQ…EPGCTWAELV (90 aa).

Its subcellular location is the cytoplasm. It is found in the nucleus. The polypeptide is NudC domain-containing protein 1 (Xenopus laevis (African clawed frog)).